The sequence spans 195 residues: Large ribosomal subunit protein uL18 (195 aa).

It belongs to the universal ribosomal protein uL18 family. In terms of assembly, part of the 50S ribosomal subunit. Contacts the 5S and 23S rRNAs.

Its function is as follows. This is one of the proteins that bind and probably mediate the attachment of the 5S RNA into the large ribosomal subunit, where it forms part of the central protuberance. This chain is Large ribosomal subunit protein uL18, found in Methanococcus vannielii.